The primary structure comprises 909 residues: Protein translocase subunit SecA (909 aa).

Residues Gln-87, 105–109 (GEGKT), and Asp-514 each bind ATP. The disordered stretch occupies residues 879–909 (TPVQGGPKVGRNDPCPCGSGKKYKHCHGKLS). Residues Cys-893, Cys-895, Cys-904, and His-905 each coordinate Zn(2+). Residues 899-909 (KKYKHCHGKLS) show a composition bias toward basic residues.

It belongs to the SecA family. In terms of assembly, monomer and homodimer. Part of the essential Sec protein translocation apparatus which comprises SecA, SecYEG and auxiliary proteins SecDF-YajC and YidC. Requires Zn(2+) as cofactor.

The protein resides in the cell inner membrane. The protein localises to the cytoplasm. The enzyme catalyses ATP + H2O + cellular proteinSide 1 = ADP + phosphate + cellular proteinSide 2.. Part of the Sec protein translocase complex. Interacts with the SecYEG preprotein conducting channel. Has a central role in coupling the hydrolysis of ATP to the transfer of proteins into and across the cell membrane, serving both as a receptor for the preprotein-SecB complex and as an ATP-driven molecular motor driving the stepwise translocation of polypeptide chains across the membrane. This chain is Protein translocase subunit SecA, found in Azoarcus sp. (strain BH72).